The primary structure comprises 376 residues: Partitioning defective 6 homolog gamma (376 aa).

Residues 18–98 (AVEVKSKFGA…PLLRVFIQKR (81 aa)) enclose the PB1 domain. Residues 127–254 (RRRAHLDIGL…VTVKPANQRN (128 aa)) form an interaction with PARD3 and CDC42 region. In terms of domain architecture, Pseudo-CRIB spans 134–151 (IGLPRDFRPVSSIIDVDL). Positions 158–251 (RVRLHRHGCE…NLIVTVKPAN (94 aa)) constitute a PDZ domain. Residues 356–376 (PRHSLALPPGGVEEHGPAVTL) form a disordered region. A compositionally biased stretch (basic and acidic residues) spans 367 to 376 (VEEHGPAVTL).

It belongs to the PAR6 family. Interacts with PARD3. Interacts with GTP-bound forms of CDC42, RHOQ/TC10 and RAC1. Interacts with the N-terminal part of PRKCI and PRKCZ. In terms of tissue distribution, widely expressed, with a higher expression in fetal and adult kidney.

Its subcellular location is the cytoplasm. The protein resides in the cell membrane. It is found in the cell junction. It localises to the tight junction. Its function is as follows. Adapter protein involved in asymmetrical cell division and cell polarization processes. May play a role in the formation of epithelial tight junctions. The PARD6-PARD3 complex links GTP-bound Rho small GTPases to atypical protein kinase C proteins. The chain is Partitioning defective 6 homolog gamma (PARD6G) from Homo sapiens (Human).